Here is a 932-residue protein sequence, read N- to C-terminus: Isoleucine--tRNA ligase (932 aa).

Residues Pro-58–His-68 carry the 'HIGH' region motif. Position 559 (Glu-559) interacts with L-isoleucyl-5'-AMP. The 'KMSKS' region motif lies at Lys-600–Ser-604. Lys-603 is an ATP binding site. Positions 895, 898, 915, and 918 each coordinate Zn(2+).

The protein belongs to the class-I aminoacyl-tRNA synthetase family. IleS type 1 subfamily. Monomer. Zn(2+) serves as cofactor.

It is found in the cytoplasm. The enzyme catalyses tRNA(Ile) + L-isoleucine + ATP = L-isoleucyl-tRNA(Ile) + AMP + diphosphate. Catalyzes the attachment of isoleucine to tRNA(Ile). As IleRS can inadvertently accommodate and process structurally similar amino acids such as valine, to avoid such errors it has two additional distinct tRNA(Ile)-dependent editing activities. One activity is designated as 'pretransfer' editing and involves the hydrolysis of activated Val-AMP. The other activity is designated 'posttransfer' editing and involves deacylation of mischarged Val-tRNA(Ile). In Saccharophagus degradans (strain 2-40 / ATCC 43961 / DSM 17024), this protein is Isoleucine--tRNA ligase.